The chain runs to 527 residues: Rhesus-like glycoprotein A (527 aa).

Residues 1 to 18 lie on the Cytoplasmic side of the membrane; the sequence is MTHNDDDHKWVTTKRKEP. A helical membrane pass occupies residues 19–39; it reads IFFTVILFIFQIFMIICFAAL. Residues 40 to 70 lie on the Extracellular side of the membrane; it reads TGYDTNKNYTGSENPDEFKGGEVQERVNNFY. An N-linked (GlcNAc...) asparagine glycan is attached at asparagine 47. A helical transmembrane segment spans residues 71–91; it reads GYFRDINIMIFFGFGFLMTFL. At 92–99 the chain is on the cytoplasmic side; that stretch reads RRYGYSAL. A helical membrane pass occupies residues 100–120; the sequence is GYTFIISALVSQWSVLLNGFF. Over 121-141 the chain is Extracellular; the sequence is EAWSHSNKHGEFPSTWEFSMD. The helical transmembrane segment at 142 to 162 threads the bilayer; it reads SLLQGFFCSGSVMISYGAILG. Residues 163-166 lie on the Cytoplasmic side of the membrane; sequence RVTP. The helical transmembrane segment at 167-187 threads the bilayer; the sequence is LHMLIMGIIEPIFFFLNVFIG. At 188-195 the chain is on the extracellular side; it reads EMNLEAID. A helical transmembrane segment spans residues 196–216; sequence VGGGMYIHLFGSVFGLTVAWF. At 217–236 the chain is on the cytoplasmic side; that stretch reads LTDRKSKECTDNAPSYSGDN. The chain crosses the membrane as a helical span at residues 237–257; sequence FAMAGTLFLWMMWPSFNAAIA. The Extracellular segment spans residues 258-263; it reads PLGEPQ. A helical membrane pass occupies residues 264–284; the sequence is FRAIANTFLSLTGSTVATFIV. The Cytoplasmic segment spans residues 285 to 299; the sequence is SRLFSHLGNKLDMVH. Residues 300–319 form a helical membrane-spanning segment; the sequence is VQNSSLAGGVVQGCIAHMNI. The Extracellular segment spans residues 320-321; the sequence is NP. A helical membrane pass occupies residues 322–342; that stretch reads GGAIAMGFIAGTISVCGYLFI. Topologically, residues 343 to 357 are cytoplasmic; that stretch reads TPKVQRKLHIQDTCG. The chain crosses the membrane as a helical span at residues 358–378; it reads ILNLHCIPGFLGSIAAIFAAI. At 379 to 406 the chain is on the extracellular side; that stretch reads KGLNNPNMYSKVEFEQIFRAGDSQASAN. The chain crosses the membrane as a helical span at residues 407-427; the sequence is LIATMVSIGLGIVGGLLVGVI. Residues 428 to 527 lie on the Cytoplasmic side of the membrane; the sequence is LLQLKKIKGL…EEDEFKQEPI (100 aa). The interval 471 to 527 is disordered; the sequence is SEDTAGGDDEEEGVGKEHGAVEMGKHNRIVQPKQDNKYHKQLPSDDEEEDEFKQEPI. The span at 483–495 shows a compositional bias: basic and acidic residues; the sequence is GVGKEHGAVEMGK. Positions 514-527 are enriched in acidic residues; sequence SDDEEEDEFKQEPI.

Belongs to the ammonium transporter (TC 2.A.49) family. Rh subfamily. In terms of assembly, interacts with ap1g1.

The protein resides in the contractile vacuole. The protein localises to the membrane. Its function is as follows. May be a carbon dioxide/bicarbonate transporter. In Dictyostelium discoideum (Social amoeba), this protein is Rhesus-like glycoprotein A (rhgA).